The sequence spans 1783 residues: Trans-splicing factor Raa3, chloroplastic (1783 aa).

A chloroplast-targeting transit peptide spans 1–40; it reads MKADLATAKGSSPAFSAPRTYRARLLSRCLNKCFNTVLVS. Disordered stretches follow at residues 97-378, 420-484, 563-610, 652-709, 918-971, 1395-1427, 1476-1506, and 1620-1639; these read ATTH…VGVN, ATSA…VAAQ, ARVG…SATK, STEP…SPAA, AAPT…QRAS, RDAKRHVRQSAAAAAAAAAAAQDQRQEQHQQHQ, PAPAHMQQQPQSSGTGCQKSRRRRMRYRRSR, and VKGRGRGRRTAARATTDVQG. Gly residues predominate over residues 105 to 118; sequence DSGGQGPAAAGGRG. 3 stretches are compositionally biased toward low complexity: residues 126–157, 186–205, and 224–242; these read QAAASAATTVSAAPQTGATKPAATAKTTPQRP, AVDAASDAAPDVAAASPAPA, and AGKPRASGRAPAAPGVGPQ. The span at 256-273 shows a compositional bias: basic and acidic residues; it reads DESHMGLTHRDQGHDERI. Positions 277–289 are enriched in low complexity; the sequence is AGEAWKAGAVAAP. Positions 307–316 are enriched in polar residues; that stretch reads LASSALGTHS. 7 stretches are compositionally biased toward low complexity: residues 343 to 374, 420 to 436, 577 to 599, 655 to 669, 676 to 709, 928 to 970, and 1403 to 1417; these read SGSSSSSSGRNSSSNSNTSTSSTSNGVTITSN, ATSAASSSTSSASSSSS, RPVQGQSGQVPQVGQGPVQSQPG, PLAASAPTTSLASAS, SSSNAHSSAAASEAAAGTVRAPTDTAAPAASPAA, SAAA…PQRA, and QSAAAAAAAAAAAQD. Basic residues-rich tracts occupy residues 1494 to 1506 and 1620 to 1630; these read KSRRRRMRYRRSR and VKGRGRGRRTA. An RAP domain is found at 1713-1772; it reads LAVGAAAGGAVIRNSRWLLSGAGALRRRLLTHAGWLVVPVRERQWKDLRSAEQQRRVVRE.

Part of a 1700 kDa complex that includes the precursor RNA to exon 1 and the tscA RNA.

It localises to the plastid. It is found in the chloroplast stroma. In terms of biological role, required for trans-splicing of exons 1 and 2 of the chloroplast encoded psaA mRNA (a group II intron). May be required for stability of the chloroplast RNA-protein complex in which it is found. The polypeptide is Trans-splicing factor Raa3, chloroplastic (RAA3) (Chlamydomonas reinhardtii (Chlamydomonas smithii)).